A 174-amino-acid chain; its full sequence is Large ribosomal subunit protein uL5 (174 aa).

Belongs to the universal ribosomal protein uL5 family. Part of the 50S ribosomal subunit; contacts the 5S rRNA and probably tRNA. Forms a bridge to the 30S subunit in the 70S ribosome.

Its function is as follows. This is one of the proteins that bind and probably mediate the attachment of the 5S RNA into the large ribosomal subunit, where it forms part of the central protuberance. In the 70S ribosome it contacts protein S13 of the 30S subunit (bridge B1b), connecting the 2 subunits; this bridge is implicated in subunit movement. May contact the P site tRNA; the 5S rRNA and some of its associated proteins might help stabilize positioning of ribosome-bound tRNAs. The polypeptide is Large ribosomal subunit protein uL5 (Halorubrum lacusprofundi (strain ATCC 49239 / DSM 5036 / JCM 8891 / ACAM 34)).